We begin with the raw amino-acid sequence, 299 residues long: Bifunctional protein FolD (299 aa).

Residues 168 to 170 (GRS), S193, and I234 contribute to the NADP(+) site.

Belongs to the tetrahydrofolate dehydrogenase/cyclohydrolase family. Homodimer.

It carries out the reaction (6R)-5,10-methylene-5,6,7,8-tetrahydrofolate + NADP(+) = (6R)-5,10-methenyltetrahydrofolate + NADPH. The enzyme catalyses (6R)-5,10-methenyltetrahydrofolate + H2O = (6R)-10-formyltetrahydrofolate + H(+). Its pathway is one-carbon metabolism; tetrahydrofolate interconversion. Catalyzes the oxidation of 5,10-methylenetetrahydrofolate to 5,10-methenyltetrahydrofolate and then the hydrolysis of 5,10-methenyltetrahydrofolate to 10-formyltetrahydrofolate. This is Bifunctional protein FolD from Bartonella henselae (strain ATCC 49882 / DSM 28221 / CCUG 30454 / Houston 1) (Rochalimaea henselae).